An 874-amino-acid chain; its full sequence is DNA primase (874 aa).

A CHC2-type zinc finger spans residues C786 to C824. Polar residues predominate over residues A848 to L857. Positions A848–N874 are disordered.

This sequence belongs to the herpesviridae DNA primase family. As to quaternary structure, associates with the helicase and the primase-associated factor to form the helicase-primase factor.

The protein resides in the host nucleus. In terms of biological role, essential component of the helicase/primase complex. Unwinds the DNA at the replication forks and generates single-stranded DNA for both leading and lagging strand synthesis. The primase initiates primer synthesis and thereby produces large amount of short RNA primers on the lagging strand that the polymerase elongates using dNTPs. The polypeptide is DNA primase (Epstein-Barr virus (strain B95-8) (HHV-4)).